A 180-amino-acid polypeptide reads, in one-letter code: Ribulose bisphosphate carboxylase small subunit, chloroplastic 3 (180 aa).

A chloroplast-targeting transit peptide spans 1 to 56; sequence MASMISSSAVTTVSRASTVQSAAVAPFGGLKSMTGFPVKKVNTDITSITSNGGRVK.

The protein belongs to the RuBisCO small chain family. Heterohexadecamer of 8 large and 8 small subunits.

The protein localises to the plastid. It localises to the chloroplast. Its function is as follows. RuBisCO catalyzes two reactions: the carboxylation of D-ribulose 1,5-bisphosphate, the primary event in carbon dioxide fixation, as well as the oxidative fragmentation of the pentose substrate. Both reactions occur simultaneously and in competition at the same active site. Although the small subunit is not catalytic it is essential for maximal activity. Binds to abscisic acid (ABA); only half of the possible binding sites are occupied in the crystal; and there are indications this is a low affinity site. This Pisum sativum (Garden pea) protein is Ribulose bisphosphate carboxylase small subunit, chloroplastic 3 (RBCS.3A).